Consider the following 225-residue polypeptide: Ribosomal RNA large subunit methyltransferase E (225 aa).

5 residues coordinate S-adenosyl-L-methionine: G76, W78, D99, D115, and D139. K179 serves as the catalytic Proton acceptor.

It belongs to the class I-like SAM-binding methyltransferase superfamily. RNA methyltransferase RlmE family.

It is found in the cytoplasm. The enzyme catalyses uridine(2552) in 23S rRNA + S-adenosyl-L-methionine = 2'-O-methyluridine(2552) in 23S rRNA + S-adenosyl-L-homocysteine + H(+). Functionally, specifically methylates the uridine in position 2552 of 23S rRNA at the 2'-O position of the ribose in the fully assembled 50S ribosomal subunit. In Afipia carboxidovorans (strain ATCC 49405 / DSM 1227 / KCTC 32145 / OM5) (Oligotropha carboxidovorans), this protein is Ribosomal RNA large subunit methyltransferase E.